We begin with the raw amino-acid sequence, 229 residues long: UPF0173 metal-dependent hydrolase SAR1785 (229 aa).

Belongs to the UPF0173 family.

In Staphylococcus aureus (strain MRSA252), this protein is UPF0173 metal-dependent hydrolase SAR1785.